We begin with the raw amino-acid sequence, 120 residues long: Putative pterin-4-alpha-carbinolamine dehydratase (120 aa).

Belongs to the pterin-4-alpha-carbinolamine dehydratase family.

The catalysed reaction is (4aS,6R)-4a-hydroxy-L-erythro-5,6,7,8-tetrahydrobiopterin = (6R)-L-erythro-6,7-dihydrobiopterin + H2O. This chain is Putative pterin-4-alpha-carbinolamine dehydratase, found in Saccharomyces cerevisiae (strain ATCC 204508 / S288c) (Baker's yeast).